The primary structure comprises 366 residues: MSTTVTVLTDTWGRRAKRFEIEGYAKILAIGTATPANWVDQTTYPDFYFRITNSQHLLEHKEKFRRICNKSKIRKRHLVLTEELLQKNPSLCTYNETSLNTRQDILVSEVPKLGKEAAMKAIKEWGRPISEITHLVFCTTSGVDMPGADFRLTKLLGLNSSVKRLMMYQQGCNAGAAMLRLAKDLAESNKGGRILVVCSEITINIFRGPSLEQDDNLLAQCLFGDGSAAMIVGTDPRPDLETPLFELVSSAQTIVPNTDSHLKLTLREMGLTFHCSRAVPSVLAENVEDCLVKAFEPYGISDWNSIFWVFHPGGNAIVDRVEERLGLGAQRFRASRDVLSEYGNLTSACVLFILDEVRNKSKKNEQ.

The active site involves cysteine 172.

The protein belongs to the thiolase-like superfamily. Chalcone/stilbene synthases family.

The catalysed reaction is (E)-4-coumaroyl-CoA + 3 malonyl-CoA + 3 H(+) = 2',4,4',6'-tetrahydroxychalcone + 3 CO2 + 4 CoA. It participates in secondary metabolite biosynthesis; flavonoid biosynthesis. In terms of biological role, the primary product of this enzyme is 4,2',4',6'-tetrahydroxychalcone (also termed naringenin-chalcone or chalcone) which can under specific conditions spontaneously isomerize into naringenin. The chain is Chalcone synthase B (CHSB) from Ipomoea triloba (Trilobed morning glory).